The primary structure comprises 267 residues: Indole-3-glycerol phosphate synthase (267 aa).

The protein belongs to the TrpC family.

The enzyme catalyses 1-(2-carboxyphenylamino)-1-deoxy-D-ribulose 5-phosphate + H(+) = (1S,2R)-1-C-(indol-3-yl)glycerol 3-phosphate + CO2 + H2O. Its pathway is amino-acid biosynthesis; L-tryptophan biosynthesis; L-tryptophan from chorismate: step 4/5. The protein is Indole-3-glycerol phosphate synthase of Ralstonia pickettii (strain 12J).